Reading from the N-terminus, the 577-residue chain is Hemagglutinin-neuraminidase (577 aa).

Residues 1–26 are Intravirion-facing; it reads MDRAVSQVALENDEREAKNTWRLIFR. A helical transmembrane segment spans residues 27–47; that stretch reads IAILFLTVVTLAISVASLLYS. The Virion surface portion of the chain corresponds to 48–577; the sequence is MGASTPSDLV…DDGVREARSG (530 aa). Positions 124 to 152 are important for interaction with fusion/F protein; it reads GAPIHDPDYIGGIGKELIVDDASDVTSFY. 4 N-linked (GlcNAc...) asparagine; by host glycosylation sites follow: Asn341, Asn433, Asn481, and Asn538.

This sequence belongs to the paramyxoviruses hemagglutinin-neuraminidase family. As to quaternary structure, homotetramer; composed of disulfide-linked homodimers. Interacts with F protein trimer. Interacts with host CG-1B; this interaction inhibits viral adsorption and replication rather than internalization.

It is found in the virion membrane. The protein localises to the host cell membrane. It catalyses the reaction Hydrolysis of alpha-(2-&gt;3)-, alpha-(2-&gt;6)-, alpha-(2-&gt;8)- glycosidic linkages of terminal sialic acid residues in oligosaccharides, glycoproteins, glycolipids, colominic acid and synthetic substrates.. Mediates the viral entry into the host cell together with fusion/F protein. Attaches the virus to sialic acid-containing cell receptors and thereby initiates infection. Binding of HN protein to the receptor induces a conformational change that allows the F protein to trigger virion/cell membranes fusion. Functionally, neuraminidase activity ensures the efficient spread of the virus by dissociating the mature virions from the neuraminic acid containing glycoproteins. The protein is Hemagglutinin-neuraminidase (HN) of Gallus gallus (Chicken).